Here is a 547-residue protein sequence, read N- to C-terminus: Chaperonin GroEL (547 aa).

Residues 30 to 33 (TLGP), K51, 87 to 91 (DGTTT), G415, and D496 contribute to the ATP site.

This sequence belongs to the chaperonin (HSP60) family. In terms of assembly, forms a cylinder of 14 subunits composed of two heptameric rings stacked back-to-back. Interacts with the co-chaperonin GroES.

The protein resides in the cytoplasm. The catalysed reaction is ATP + H2O + a folded polypeptide = ADP + phosphate + an unfolded polypeptide.. Its function is as follows. Together with its co-chaperonin GroES, plays an essential role in assisting protein folding. The GroEL-GroES system forms a nano-cage that allows encapsulation of the non-native substrate proteins and provides a physical environment optimized to promote and accelerate protein folding. The protein is Chaperonin GroEL of Chlorobaculum parvum (strain DSM 263 / NCIMB 8327) (Chlorobium vibrioforme subsp. thiosulfatophilum).